Reading from the N-terminus, the 299-residue chain is Probable lipid kinase YegS (299 aa).

Residues 2 to 133 form the DAGKc domain; that stretch reads AEFPASLLIL…IDMAQVNKQT (132 aa). Residues T40, 66 to 72, and T95 contribute to the ATP site; that span reads GDGTINE. Mg(2+) is bound by residues L215, D218, and L220. The active-site Proton acceptor is the E271.

It belongs to the diacylglycerol/lipid kinase family. YegS lipid kinase subfamily. Mg(2+) is required as a cofactor. The cofactor is Ca(2+).

The protein localises to the cytoplasm. In terms of biological role, probably phosphorylates lipids; the in vivo substrate is unknown. In Shigella dysenteriae serotype 1 (strain Sd197), this protein is Probable lipid kinase YegS.